The primary structure comprises 1231 residues: Pesticidal crystal protein Cry1Bd (1231 aa).

It belongs to the delta endotoxin family.

Functionally, promotes colloidosmotic lysis by binding to the midgut epithelial cells of lepidopteran larvae. Toxic to Plutella xylostella. In Bacillus thuringiensis subsp. wuhanensis, this protein is Pesticidal crystal protein Cry1Bd (cry1Bd).